The primary structure comprises 128 residues: CD59 glycoprotein (128 aa).

The first 25 residues, 1-25, serve as a signal peptide directing secretion; it reads MGIQGGSVLFGLLLILAVFCHSGHS. The UPAR/Ly6 domain occupies 26 to 108; that stretch reads LQCYSCPYST…ILENGGTTLS (83 aa). Cystine bridges form between Cys-28-Cys-51, Cys-31-Cys-38, Cys-44-Cys-64, Cys-70-Cys-88, and Cys-89-Cys-94. Residue Asn-43 is glycosylated (N-linked (GlcNAc...) asparagine). Asn-102 carries GPI-anchor amidated asparagine lipidation. A propeptide spans 103 to 128 (removed in mature form); it reads GGTTLSKKTVLLLVTPFLAAAWSLHP.

In terms of assembly, interacts with T-cell surface antigen CD2. In terms of processing, N- and O-glycosylated.

Its subcellular location is the cell membrane. The protein resides in the secreted. Potent inhibitor of the complement membrane attack complex (MAC) action, which protects self-cells from damage during complement activation. Acts by binding to the beta-haipins of C8 (C8A and C8B) components of the assembling MAC, forming an intermolecular beta-sheet that prevents incorporation of the multiple copies of C9 required for complete formation of the osmolytic pore. The sequence is that of CD59 glycoprotein from Callithrix sp. (Marmoset).